The following is a 259-amino-acid chain: Global transcriptional regulator CodY (259 aa).

The tract at residues 1-155 is GAF domain; sequence MDLLTRTRKI…GATVVGMEIL (155 aa). The H-T-H motif DNA-binding region spans 203–222; sequence ASKIADRVGITRSVIVNALR. Residue Ser-215 is modified to Phosphoserine.

Belongs to the CodY family.

The protein localises to the cytoplasm. Functionally, DNA-binding global transcriptional regulator which is involved in the adaptive response to starvation and acts by directly or indirectly controlling the expression of numerous genes in response to nutrient availability. During rapid exponential growth, CodY is highly active and represses genes whose products allow adaptation to nutrient depletion. This Shouchella clausii (strain KSM-K16) (Alkalihalobacillus clausii) protein is Global transcriptional regulator CodY.